Reading from the N-terminus, the 191-residue chain is Probable DNA-directed RNA polymerase subunit delta (191 aa).

The HTH HARE-type domain occupies 14–83 (LSMIEVARAI…GENKWGLRSW (70 aa)). Composition is skewed to acidic residues over residues 117 to 136 (GDED…DFTE) and 142 to 191 (EYDE…EEEV). Positions 117–191 (GDEDAIDYND…DEEEEEEEEV (75 aa)) are disordered.

This sequence belongs to the RpoE family. As to quaternary structure, RNAP is composed of a core of 2 alpha, a beta and a beta' subunits. The core is associated with a delta subunit and one of several sigma factors.

In terms of biological role, participates in both the initiation and recycling phases of transcription. In the presence of the delta subunit, RNAP displays an increased specificity of transcription, a decreased affinity for nucleic acids, and an increased efficiency of RNA synthesis because of enhanced recycling. The sequence is that of Probable DNA-directed RNA polymerase subunit delta from Streptococcus agalactiae serotype Ia (strain ATCC 27591 / A909 / CDC SS700).